The following is a 314-amino-acid chain: Probable carboxylesterase 2 (314 aa).

Residues 79 to 81 (HGG) carry the Involved in the stabilization of the negatively charged intermediate by the formation of the oxyanion hole motif. Catalysis depends on residues serine 158, aspartate 254, and histidine 286.

This sequence belongs to the 'GDXG' lipolytic enzyme family. Expressed in roots and flowers.

It catalyses the reaction a carboxylic ester + H2O = an alcohol + a carboxylate + H(+). Carboxylesterase acting on esters with varying acyl chain length. The sequence is that of Probable carboxylesterase 2 (CXE2) from Arabidopsis thaliana (Mouse-ear cress).